A 541-amino-acid chain; its full sequence is Glucose-6-phosphate isomerase (541 aa).

Glu-346 (proton donor) is an active-site residue. Active-site residues include His-377 and Lys-506.

This sequence belongs to the GPI family.

The protein resides in the cytoplasm. The enzyme catalyses alpha-D-glucose 6-phosphate = beta-D-fructose 6-phosphate. The protein operates within carbohydrate biosynthesis; gluconeogenesis. It participates in carbohydrate degradation; glycolysis; D-glyceraldehyde 3-phosphate and glycerone phosphate from D-glucose: step 2/4. Its function is as follows. Catalyzes the reversible isomerization of glucose-6-phosphate to fructose-6-phosphate. This chain is Glucose-6-phosphate isomerase, found in Agrobacterium fabrum (strain C58 / ATCC 33970) (Agrobacterium tumefaciens (strain C58)).